The following is a 154-amino-acid chain: NADPH-dependent 7-cyano-7-deazaguanine reductase (154 aa).

Polar residues predominate over residues 1-21; it reads MPNTDVSSLSMLGHQTETASS. Residues 1–26 form a disordered region; the sequence is MPNTDVSSLSMLGHQTETASSPEEAV. Cysteine 52 (thioimide intermediate) is an active-site residue. Aspartate 59 functions as the Proton donor in the catalytic mechanism. Substrate contacts are provided by residues 74-76 and 93-94; these read VES and HE.

It belongs to the GTP cyclohydrolase I family. QueF type 1 subfamily.

It is found in the cytoplasm. The catalysed reaction is 7-aminomethyl-7-carbaguanine + 2 NADP(+) = 7-cyano-7-deazaguanine + 2 NADPH + 3 H(+). The protein operates within tRNA modification; tRNA-queuosine biosynthesis. Catalyzes the NADPH-dependent reduction of 7-cyano-7-deazaguanine (preQ0) to 7-aminomethyl-7-deazaguanine (preQ1). This Rhizobium etli (strain ATCC 51251 / DSM 11541 / JCM 21823 / NBRC 15573 / CFN 42) protein is NADPH-dependent 7-cyano-7-deazaguanine reductase.